Reading from the N-terminus, the 149-residue chain is Large ribosomal subunit protein bL9 (149 aa).

Belongs to the bacterial ribosomal protein bL9 family.

Its function is as follows. Binds to the 23S rRNA. This Aliivibrio fischeri (strain ATCC 700601 / ES114) (Vibrio fischeri) protein is Large ribosomal subunit protein bL9.